Consider the following 244-residue polypeptide: UL16-binding protein 1 (244 aa).

The N-terminal stretch at 1-25 is a signal peptide; it reads MAAAASPAFLLCLPLLHLLSGWSRA. The interval 26-117 is MHC class I alpha-1 like; sequence GWVDTHCLCY…IQVENLIPIE (92 aa). Cys-50 and Cys-66 are disulfide-bonded. The N-linked (GlcNAc...) asparagine glycan is linked to Asn-82. An MHC class I alpha-2 like region spans residues 118–208; it reads PLTLQARMSC…MYWEQMLDPT (91 aa). Residues Cys-127 and Cys-190 are joined by a disulfide bond. Gly-216 is lipidated: GPI-anchor amidated glycine. Positions 217–244 are cleaved as a propeptide — removed in mature form; it reads TTQPKAMATTLSPWSLLIIFLCFILAGR.

This sequence belongs to the MHC class I family. Interacts with KLRK1/NKG2D. Does not bind to beta2-microglobulin. As to quaternary structure, (Microbial infection) In CMV-infected cells, interacts with the viral glycoprotein UL16; this interaction causes ULBP1 retention in the endoplasmic reticulum and cis-Golgi and prevents binding to and activation of KLRK1/NKG2D, providing CMV with an immune evasion mechanism. In terms of tissue distribution, expressed in T-cells, B-cells, erythroleukemia cell lines and in a wide range of tissues including heart, brain, lung, liver, testis, lymph node, thymus, tonsil and bone marrow. Also found in fetal heart, brain, lung and liver.

The protein localises to the cell membrane. It is found in the endoplasmic reticulum. Binds and activates the KLRK1/NKG2D receptor, mediating natural killer cell cytotoxicity. In Homo sapiens (Human), this protein is UL16-binding protein 1 (ULBP1).